The following is a 257-amino-acid chain: S-methyl-5'-thioadenosine phosphorylase (257 aa).

Phosphate-binding positions include serine 10 and 50–51 (RH). An intrachain disulfide couples cysteine 130 to cysteine 195. Position 180 (methionine 180) interacts with substrate. Threonine 181 serves as a coordination point for phosphate. 204–206 (DYD) contributes to the substrate binding site. Cysteine 246 and cysteine 248 are disulfide-bonded.

The protein belongs to the PNP/MTAP phosphorylase family. MTAP subfamily. As to quaternary structure, homohexamer. Dimer of a homotrimer.

It carries out the reaction S-methyl-5'-thioadenosine + phosphate = 5-(methylsulfanyl)-alpha-D-ribose 1-phosphate + adenine. The protein operates within amino-acid biosynthesis; L-methionine biosynthesis via salvage pathway; S-methyl-5-thio-alpha-D-ribose 1-phosphate from S-methyl-5'-thioadenosine (phosphorylase route): step 1/1. Its function is as follows. Catalyzes the reversible phosphorylation of S-methyl-5'-thioadenosine (MTA) to adenine and 5-methylthioribose-1-phosphate. Involved in the breakdown of MTA, a major by-product of polyamine biosynthesis. Responsible for the first step in the methionine salvage pathway after MTA has been generated from S-adenosylmethionine. Has broad substrate specificity with 6-aminopurine nucleosides as preferred substrates. The polypeptide is S-methyl-5'-thioadenosine phosphorylase (Pyrococcus furiosus (strain ATCC 43587 / DSM 3638 / JCM 8422 / Vc1)).